The chain runs to 60 residues: Large ribosomal subunit protein bL32 (60 aa).

Residues 1 to 16 (MAVPKRKTTPSKRGMR) are compositionally biased toward basic residues. Positions 1–34 (MAVPKRKTTPSKRGMRRAHDALSSPVYIEDKDSG) are disordered.

This sequence belongs to the bacterial ribosomal protein bL32 family.

In Maricaulis maris (strain MCS10) (Caulobacter maris), this protein is Large ribosomal subunit protein bL32.